The primary structure comprises 132 residues: MSAATDEILEKLKSLTLLEAAELVKQIEETFGVSAAAPVGGMMVAAPVAGAAAAPAEEVEEKTAFDVILEEVPADKKIAVLKVVRSLTGLGLKEAKEVVESTPKPVKEGASKEDAEAAKKELEEAGAKVSIK.

Over residues 100-126 (ESTPKPVKEGASKEDAEAAKKELEEAG) the composition is skewed to basic and acidic residues. Residues 100-132 (ESTPKPVKEGASKEDAEAAKKELEEAGAKVSIK) are disordered.

This sequence belongs to the bacterial ribosomal protein bL12 family. As to quaternary structure, homodimer. Part of the ribosomal stalk of the 50S ribosomal subunit. Forms a multimeric L10(L12)X complex, where L10 forms an elongated spine to which 2 to 4 L12 dimers bind in a sequential fashion. Binds GTP-bound translation factors.

Its function is as follows. Forms part of the ribosomal stalk which helps the ribosome interact with GTP-bound translation factors. Is thus essential for accurate translation. The sequence is that of Large ribosomal subunit protein bL12 from Thermosynechococcus vestitus (strain NIES-2133 / IAM M-273 / BP-1).